The sequence spans 688 residues: DNA ligase (688 aa).

NAD(+)-binding positions include 51–55 (DSEYD), 100–101 (SL), and Glu129. The N6-AMP-lysine intermediate role is filled by Lys131. The NAD(+) site is built by Arg152, Glu189, Lys308, and Lys332. Zn(2+)-binding residues include Cys426, Cys429, Cys444, and Cys450. The region spanning 609-688 (ADEQPLKGQT…DELLALLANS (80 aa)) is the BRCT domain.

It belongs to the NAD-dependent DNA ligase family. LigA subfamily. Mg(2+) is required as a cofactor. Requires Mn(2+) as cofactor.

The enzyme catalyses NAD(+) + (deoxyribonucleotide)n-3'-hydroxyl + 5'-phospho-(deoxyribonucleotide)m = (deoxyribonucleotide)n+m + AMP + beta-nicotinamide D-nucleotide.. DNA ligase that catalyzes the formation of phosphodiester linkages between 5'-phosphoryl and 3'-hydroxyl groups in double-stranded DNA using NAD as a coenzyme and as the energy source for the reaction. It is essential for DNA replication and repair of damaged DNA. The polypeptide is DNA ligase (Shewanella sp. (strain MR-7)).